A 481-amino-acid polypeptide reads, in one-letter code: UDP-N-acetylmuramoyl-L-alanyl-D-glutamate--L-lysine ligase (481 aa).

UDP-N-acetyl-alpha-D-muramoyl-L-alanyl-D-glutamate is bound at residue serine 42. 118–124 is a binding site for ATP; that stretch reads GTKGKTT. Residues 160 to 161, serine 187, and arginine 195 contribute to the UDP-N-acetyl-alpha-D-muramoyl-L-alanyl-D-glutamate site; that span reads TT. Lysine 229 bears the N6-carboxylysine mark. The short motif at 404 to 407 is the L-lysine recognition motif element; that stretch reads DDPN.

Belongs to the MurCDEF family. MurE subfamily. In terms of processing, carboxylation is probably crucial for Mg(2+) binding and, consequently, for the gamma-phosphate positioning of ATP.

It localises to the cytoplasm. It catalyses the reaction UDP-N-acetyl-alpha-D-muramoyl-L-alanyl-D-glutamate + L-lysine + ATP = UDP-N-acetyl-alpha-D-muramoyl-L-alanyl-gamma-D-glutamyl-L-lysine + ADP + phosphate + H(+). Its pathway is cell wall biogenesis; peptidoglycan biosynthesis. Catalyzes the addition of L-lysine to the nucleotide precursor UDP-N-acetylmuramoyl-L-alanyl-D-glutamate (UMAG) in the biosynthesis of bacterial cell-wall peptidoglycan. The chain is UDP-N-acetylmuramoyl-L-alanyl-D-glutamate--L-lysine ligase from Streptococcus pneumoniae (strain ATCC BAA-255 / R6).